A 216-amino-acid polypeptide reads, in one-letter code: ATP phosphoribosyltransferase (216 aa).

Belongs to the ATP phosphoribosyltransferase family. Short subfamily. As to quaternary structure, heteromultimer composed of HisG and HisZ subunits.

It localises to the cytoplasm. It catalyses the reaction 1-(5-phospho-beta-D-ribosyl)-ATP + diphosphate = 5-phospho-alpha-D-ribose 1-diphosphate + ATP. The protein operates within amino-acid biosynthesis; L-histidine biosynthesis; L-histidine from 5-phospho-alpha-D-ribose 1-diphosphate: step 1/9. Catalyzes the condensation of ATP and 5-phosphoribose 1-diphosphate to form N'-(5'-phosphoribosyl)-ATP (PR-ATP). Has a crucial role in the pathway because the rate of histidine biosynthesis seems to be controlled primarily by regulation of HisG enzymatic activity. This chain is ATP phosphoribosyltransferase, found in Rubrobacter xylanophilus (strain DSM 9941 / JCM 11954 / NBRC 16129 / PRD-1).